The chain runs to 209 residues: Ribosome maturation factor RimM (209 aa).

The interval 1–28 (MARRPQRPAPSGRAGAGRGAAGAAPPGP) is disordered. The 75-residue stretch at 123–197 (EDEFFTADLV…RVTIAPPEDL (75 aa)) folds into the PRC barrel domain.

Belongs to the RimM family. As to quaternary structure, binds ribosomal protein uS19.

It localises to the cytoplasm. An accessory protein needed during the final step in the assembly of 30S ribosomal subunit, possibly for assembly of the head region. Essential for efficient processing of 16S rRNA. May be needed both before and after RbfA during the maturation of 16S rRNA. It has affinity for free ribosomal 30S subunits but not for 70S ribosomes. This is Ribosome maturation factor RimM from Methylobacterium sp. (strain 4-46).